Consider the following 134-residue polypeptide: L-ectoine synthase (134 aa).

Belongs to the ectoine synthase family.

The catalysed reaction is (2S)-4-acetamido-2-aminobutanoate = L-ectoine + H2O. Its pathway is amine and polyamine biosynthesis; ectoine biosynthesis; L-ectoine from L-aspartate 4-semialdehyde: step 3/3. In terms of biological role, catalyzes the circularization of gamma-N-acetyl-alpha,gamma-diaminobutyric acid (ADABA) to ectoine (1,4,5,6-tetrahydro-2-methyl-4-pyrimidine carboxylic acid), which is an excellent osmoprotectant. The protein is L-ectoine synthase of Shouchella clausii (strain KSM-K16) (Alkalihalobacillus clausii).